A 196-amino-acid chain; its full sequence is ATP-dependent Clp protease proteolytic subunit (196 aa).

Serine 101 functions as the Nucleophile in the catalytic mechanism. Histidine 126 is a catalytic residue.

It belongs to the peptidase S14 family. In terms of assembly, component of the chloroplastic Clp protease core complex.

The protein resides in the plastid. Its subcellular location is the chloroplast stroma. The catalysed reaction is Hydrolysis of proteins to small peptides in the presence of ATP and magnesium. alpha-casein is the usual test substrate. In the absence of ATP, only oligopeptides shorter than five residues are hydrolyzed (such as succinyl-Leu-Tyr-|-NHMec, and Leu-Tyr-Leu-|-Tyr-Trp, in which cleavage of the -Tyr-|-Leu- and -Tyr-|-Trp bonds also occurs).. In terms of biological role, cleaves peptides in various proteins in a process that requires ATP hydrolysis. Has a chymotrypsin-like activity. Plays a major role in the degradation of misfolded proteins. The protein is ATP-dependent Clp protease proteolytic subunit of Eucalyptus globulus subsp. globulus (Tasmanian blue gum).